Here is a 151-residue protein sequence, read N- to C-terminus: Ribosome maturation factor RimP (151 aa).

It belongs to the RimP family.

It is found in the cytoplasm. In terms of biological role, required for maturation of 30S ribosomal subunits. In Nitrosococcus oceani (strain ATCC 19707 / BCRC 17464 / JCM 30415 / NCIMB 11848 / C-107), this protein is Ribosome maturation factor RimP.